A 355-amino-acid polypeptide reads, in one-letter code: MHNFAKIFRSNFIDINAANKFEIFLKTILRIYKTPARTHLLAHAADISAIYAVRQIYNYMKNDEEGRTVLKEKPLLIRQDIQFNELKKLPKNTLGYKYMKFLETYKLHAHDREVSHFFTDLNYSYILTRYRQIHDIGHVVYNLNISIESEAALKLIELVQTKLPITLLAILVAPFMTPIYRFQYIFKDSLPSNFLSPNFDFTYTDAYNYVDELSIKQYEYNLTDYFHVEKRNDRNFYTKMYQHYFDNINNSSAVRGSIIYGFENKSSNDIIYDQPNREYIFLKNLKKKYLLFQYKPRKNLLRELYPWAYMAGVSTTKPLHSIHIEKWLDKDIDLFRRTYNISPLPDHLNLMAGIN.

Residues histidine 134, aspartate 135, histidine 138, and glutamate 150 each contribute to the Zn(2+) site.

The protein belongs to the COQ4 family. As to quaternary structure, component of a multi-subunit COQ enzyme complex. Requires Zn(2+) as cofactor.

Its subcellular location is the mitochondrion inner membrane. The enzyme catalyses a 4-hydroxy-3-methoxy-5-(all-trans-polyprenyl)benzoate + H(+) = a 2-methoxy-6-(all-trans-polyprenyl)phenol + CO2. It participates in cofactor biosynthesis; ubiquinone biosynthesis. Lyase that catalyzes the C1-decarboxylation of 4-hydroxy-3-methoxy-5-(all-trans-polyprenyl)benzoic acid into 2-methoxy-6-(all-trans-polyprenyl)phenol during ubiquinone biosynthesis. The sequence is that of Ubiquinone biosynthesis protein COQ4 homolog, mitochondrial from Plasmodium vivax (strain Salvador I).